We begin with the raw amino-acid sequence, 158 residues long: Transcriptional repressor NrdR (158 aa).

The segment at 3–34 is a zinc-finger region; it reads CPYCGYPDSRVIDSRPTDDNTAIRRRRECLKC. In terms of domain architecture, ATP-cone spans 49-139; the sequence is ILVIKKDNRR…VYRQFKDINT (91 aa).

Belongs to the NrdR family. It depends on Zn(2+) as a cofactor.

In terms of biological role, negatively regulates transcription of bacterial ribonucleotide reductase nrd genes and operons by binding to NrdR-boxes. This is Transcriptional repressor NrdR from Caldanaerobacter subterraneus subsp. tengcongensis (strain DSM 15242 / JCM 11007 / NBRC 100824 / MB4) (Thermoanaerobacter tengcongensis).